An 88-amino-acid polypeptide reads, in one-letter code: UPF0250 protein SO_1163 (88 aa).

The protein belongs to the UPF0250 family.

This chain is UPF0250 protein SO_1163, found in Shewanella oneidensis (strain ATCC 700550 / JCM 31522 / CIP 106686 / LMG 19005 / NCIMB 14063 / MR-1).